We begin with the raw amino-acid sequence, 105 residues long: UPF0235 protein RF_1332 (105 aa).

Belongs to the UPF0235 family.

In Rickettsia felis (strain ATCC VR-1525 / URRWXCal2) (Rickettsia azadi), this protein is UPF0235 protein RF_1332.